A 1357-amino-acid chain; its full sequence is MAYSYTEKKRIRKDFSKLPDVMDVPYLLAIQLDSYREFLQAGATKEQFRDIGLHAAFKSVFPIISYSGNAALEYVGYRLGEPAFDVKECVLRGVTFAVPLRVKVRLIIFDRESSNKAIKDIKEQEVYMGEIPLMTENGTFIINGTERVIVSQLHRSPGVFFDHDRGKTHSSGKLLYSARIIPYRGSWLDFEFDPKDCVFVRIDRRRKLPASVLLRALGYSTEEILNAFYATNVFHIKGETLNLELVPQRLRGEVASIDIKDGSGKVIVEQGRRITARHINQLEKAGVSQLEVPFDYLIGRTIAKAIVHPATGEIIAECNTELTLDLLAKVAKAQVVRIETLYTNDIDCGPFISDTLKIDNTSNQLEALVEIYRMMRPGEPPTKEAAETLFGNLFFSAERYDLSAVGRMKFNRRIGRTEIEGPGVLSKEDIIDVLKTLVDIRNGKGIVDDIDHLGNRRVRCVGEMAENQFRVGLVRVERAVKERLSMAESEGLMPQDLINAKPVAAAIKEFFGSSQLSQFMDQNNPLSEITHKRRVSALGPGGLTRERAGFEVRDVHPTHYGRVCPIETPEGPNIGLINSLATYARTNKYGFLESPYRVVKDSLVTDEIVFLSAIEEADHVIAQASATLNEKGQLVDELVAVRHLNEFTVKAPEDVTLMDVSPKQVVSVAASLIPFLEHDDANRALMGSNMQRQAVPTLRADKPLVGTGMERNVARDSGVCVVARRGGVIDSVDASRVVVRVADDEVETGEAGVDIYNLTKYTRSNQNTCINQRPLVSKGDVVARGDILADGPSTDMGELALGQNMRVAFMPWNGFNFEDSICLSERVVQEDRFTTIHIQELTCVARDTKLGPEEITADIPNVGEAALNKLDEAGIVYVGAEVQAGDILVGKVTPKGETQLTPEEKLLRAIFGEKASDVKDTSLRVPTGTKGTVIDVQVFTRDGVERDSRALSIEKMQLDQIRKDLNEEFRIVEGATFERLRAALVGAKAEGGPALKKGTEITDDYLDGLERGQWFKLRMADDALNEQLEKAQAYISDRRQLLDDKFEDKKRKLQQGDDLAPGVLKIVKVYLAIKRRIQPGDKMAGRHGNKGVVSVIMPVEDMPHDANGTPVDIVLNPLGVPSRMNVGQILETHLGLAAKGLGEKINRMLEEQRKVAELRKFLHEIYNEIGGREENLDELGDNEILALAKNLRGGVPMATPVFDGAKEREIKAMLKLADLPESGQMRLFDGRTGNQFERPTTVGYMYMLKLNHLVDDKMHARSTGSYSLVTQQPLGGKAQFGGQRFGEMEVWALEAYGAAYTLQEMLTVKSDDVNGRTKMYKNIVDGDHRMEAGMPESFNVLIKEIRSLGIDIELETE.

Belongs to the RNA polymerase beta chain family. As to quaternary structure, the RNAP catalytic core consists of 2 alpha, 1 beta, 1 beta' and 1 omega subunit. When a sigma factor is associated with the core the holoenzyme is formed, which can initiate transcription.

It catalyses the reaction RNA(n) + a ribonucleoside 5'-triphosphate = RNA(n+1) + diphosphate. DNA-dependent RNA polymerase catalyzes the transcription of DNA into RNA using the four ribonucleoside triphosphates as substrates. In Pseudomonas aeruginosa (strain LESB58), this protein is DNA-directed RNA polymerase subunit beta.